The chain runs to 984 residues: Zinc finger and BTB domain-containing protein 4 (984 aa).

The BTB domain maps to 30–131; it reads CDVTLIAGDT…IYSARLALPG (102 aa). Lys-40 is covalently cross-linked (Glycyl lysine isopeptide (Lys-Gly) (interchain with G-Cter in SUMO2)). Disordered regions lie at residues 71–104, 172–210, and 227–262; these read TGGSAPSPATTTAASSSSSPPPPASPHSSSPPRV, MVTSEPNEDSLGPGLRTDGGWEGDKAEPLTPDSQPRRPF, and THEAQCRRGSNTRGSAGLGPGGSGPGGPAGVDASAL. Residues 74 to 88 are compositionally biased toward low complexity; sequence SAPSPATTTAASSSS. The interval 165–324 is interaction with CBFA2T3; sequence VPPAPSSMVT…CRYCEKVFAL (160 aa). Residues 210–232 form a C2H2-type 1; atypical zinc finger; the sequence is FPCPRCGKSFIHPKRLQTHEAQC. The segment covering 242–255 has biased composition (gly residues); the sequence is AGLGPGGSGPGGPA. 3 consecutive C2H2-type zinc fingers follow at residues 285–307, 313–335, and 341–364; these read YVCAACERSYVTLSSLKRHSNVH, YPCRYCEKVFALAEYRTKHEVWH, and YQCIFCWETFVTYYNLKTHQRAFH. Phosphoserine is present on Ser-367. Residues 461–575 are disordered; sequence GSSSSGAAGG…GSSQLQAPPP (115 aa). Residues 467–477 are compositionally biased toward gly residues; the sequence is AAGGGPVGTGG. Low complexity-rich tracts occupy residues 478 to 488 and 507 to 529; these read SQAASVITYTT and ATPTSPASTAVIPATAAGPATAT. A Glycyl lysine isopeptide (Lys-Gly) (interchain with G-Cter in SUMO2) cross-link involves residue Lys-548. Residues 552–565 are compositionally biased toward gly residues; sequence GVSGSGGSPTGTGR. Residue Lys-590 forms a Glycyl lysine isopeptide (Lys-Gly) (interchain with G-Cter in SUMO2) linkage. 5 disordered regions span residues 593–696, 713–734, 756–836, 853–876, and 947–984; these read ISET…GERR, RKHQEAHSGGSHNSRTGRRSST, QRHA…VAGG, GGSRDPGAGKGKPGNEGPVGASEG, and QTAPPTPPTPPPPLPLPVPPKGVGEMTGVERTQKGDVG. The span at 604–627 shows a compositional bias: acidic residues; sequence SGEEVEESEEEEEEEEEEDQEDQE. Residues 628-637 show a composition bias toward basic and acidic residues; the sequence is ESKAGGEDQL. 2 C2H2-type zinc fingers span residues 697-719 and 736-758; these read HRCGDCAQAFATLRKLRKHQEAH and FTCPHCAKVCKTAAALNRHGQRH. A phosphothreonine; by HIPK2 mark is found at Thr-766 and Thr-768. Low complexity predominate over residues 807–819; sequence AAAAAAEASESAS. Pro residues predominate over residues 948–966; sequence TAPPTPPTPPPPLPLPVPP. At Thr-955 the chain carries Phosphothreonine; by HIPK2.

Interacts with HIPK2. Interacts with CBFA2T3. Interacts with ZBTB38. Phosphorylated by HIPK2. This phosphorylation reduces stability and triggers ZBTB4 protein degradation in response to DNA damage.

It is found in the nucleus. It localises to the chromosome. Functionally, transcriptional repressor with bimodal DNA-binding specificity. Represses transcription in a methyl-CpG-dependent manner. Binds with a higher affinity to methylated CpG dinucleotides in the consensus sequence 5'-CGCG-3' but can also bind to the non-methylated consensus sequence 5'-CTGCNA-3' also known as the consensus kaiso binding site (KBS). Can also bind specifically to a single methyl-CpG pair and can bind hemimethylated DNA but with a lower affinity compared to methylated DNA. Plays a role in postnatal myogenesis, may be involved in the regulation of satellite cells self-renewal. The protein is Zinc finger and BTB domain-containing protein 4 (Zbtb4) of Rattus norvegicus (Rat).